Consider the following 119-residue polypeptide: Large ribosomal subunit protein uL14 (119 aa).

Belongs to the universal ribosomal protein uL14 family. In terms of assembly, part of the 50S ribosomal subunit. Forms a cluster with proteins L3 and L19. In the 70S ribosome, L14 and L19 interact and together make contacts with the 16S rRNA in bridges B5 and B8.

Binds to 23S rRNA. Forms part of two intersubunit bridges in the 70S ribosome. The polypeptide is Large ribosomal subunit protein uL14 (Anaplasma marginale (strain St. Maries)).